The primary structure comprises 141 residues: Lutropin subunit beta (141 aa).

The signal sequence occupies residues 1–18 (MGTLQGLLLWLLLGTGGA). Intrachain disulfides connect Cys29–Cys77, Cys43–Cys92, Cys46–Cys130, Cys54–Cys108, Cys58–Cys110, and Cys113–Cys120. An N-linked (GlcNAc...) asparagine glycan is attached at Asn33.

Belongs to the glycoprotein hormones subunit beta family. Heterodimer of a common alpha chain and a unique beta chain which confers biological specificity to thyrotropin, lutropin, follitropin and gonadotropin.

The protein resides in the secreted. Functionally, promotes spermatogenesis and ovulation by stimulating the testes and ovaries to synthesize steroids. The chain is Lutropin subunit beta (LHB) from Oryctolagus cuniculus (Rabbit).